The chain runs to 371 residues: Glycosyltransferase 8 domain-containing protein 1 (371 aa).

At 1–7 (MSFRKVN) the chain is on the cytoplasmic side. A helical; Signal-anchor for type II membrane protein membrane pass occupies residues 8–28 (IIIWVLAVVLFLLVLHHNFLS). Residues 29–371 (LSSLLKNDIS…RRHMDTSNIK (343 aa)) lie on the Lumenal side of the membrane. An N-linked (GlcNAc...) asparagine glycan is attached at Asn257.

Belongs to the glycosyltransferase 8 family.

Its subcellular location is the membrane. The polypeptide is Glycosyltransferase 8 domain-containing protein 1 (Glt8d1) (Mus musculus (Mouse)).